A 367-amino-acid chain; its full sequence is Apurinic-apyrimidinic endonuclease 1 (367 aa).

Residues His-83, His-123, Glu-158, Asp-192, His-195, His-229, Asp-242, His-244, and Glu-274 each contribute to the Zn(2+) site. The disordered stretch occupies residues 312-367 (DTLQKLGAKSRKEQLDKFEVKQKKRAGGTKRKKATAEPSDNDILSQMTKKRKTKKE). Positions 321–332 (SRKEQLDKFEVK) are enriched in basic and acidic residues. The segment covering 333 to 344 (QKKRAGGTKRKK) has biased composition (basic residues). At Ser-356 the chain carries Phosphoserine.

It belongs to the AP endonuclease 2 family. In terms of assembly, monomer. Requires Zn(2+) as cofactor.

The protein localises to the nucleus. In terms of biological role, DNA repair enzyme that cleaves apurinic/apyrimidinic (AP) sites and removes 3'-blocking groups present at single strand breaks of damaged DNA. APN1 accounts for &gt; 97% of both apurinic/apyrimidinic (AP) endonuclease and DNA 3'-repair diesterase activities. The sequence is that of Apurinic-apyrimidinic endonuclease 1 (APN1) from Saccharomyces cerevisiae (strain ATCC 204508 / S288c) (Baker's yeast).